The following is a 20-amino-acid chain: Toxin b subunit beta (20 aa).

Toxin b is a heterodimer composed of toxin alpha and toxin beta. As to expression, expressed by the venom gland.

The protein localises to the secreted. Functionally, binds to sodium channels (Nav) and affects the channel activation process. The polypeptide is Toxin b subunit beta (Androctonus crassicauda (Arabian fat-tailed scorpion)).